We begin with the raw amino-acid sequence, 410 residues long: TNF receptor-associated factor family protein DDB_G0279745 (410 aa).

Residues 27-67 (CVICSFPLFDGLQCKRGHGACKSCWEKIIGENGKKECHSCR) form an RING-type; degenerate zinc finger. TRAF-type zinc fingers lie at residues 81–154 (YLEK…SLEQ) and 154–213 (QHQN…DESI). Positions 216–284 (LSNSIVEIQK…SMINKLDDSA (69 aa)) form a coiled coil.

This sequence belongs to the TNF receptor-associated factor family.

Its subcellular location is the cytoplasm. Probable adapter protein and signal transducer that links members of the tumor necrosis factor receptor family to different signaling pathways by association with the receptor cytoplasmic domain and kinases. This is TNF receptor-associated factor family protein DDB_G0279745 from Dictyostelium discoideum (Social amoeba).